The following is a 1120-amino-acid chain: Hachiman protein HamB (1120 aa).

Residues 278–452 (DGELLKNDGF…WIGEDDKAKR (175 aa)) form the Helicase ATP-binding domain. An ATP-binding site is contributed by 291–298 (MPTSSGKT). Residues 395–398 (DEGH) carry the DEAH box motif. Positions 521–710 (ATATKMLDVG…NIEKATSGLY (190 aa)) constitute a Helicase C-terminal domain.

This sequence belongs to the helicase family.

Functionally, component of antiviral defense system Hachiman, composed of HamA and HamB. Expression of Hachiman in B.subtilis (strain BEST7003) confers resistance to phages phi105, phi29, phi3T, rho14, SBSphiJ, SpBeta and SPR. Probably a helicase. The sequence is that of Hachiman protein HamB from Bacillus cereus.